The chain runs to 165 residues: Chorismate pyruvate-lyase (165 aa).

Substrate-binding residues include Met35, Arg77, Leu115, and Glu156.

This sequence belongs to the UbiC family. As to quaternary structure, monomer.

The protein localises to the cytoplasm. It catalyses the reaction chorismate = 4-hydroxybenzoate + pyruvate. The protein operates within cofactor biosynthesis; ubiquinone biosynthesis. In terms of biological role, removes the pyruvyl group from chorismate, with concomitant aromatization of the ring, to provide 4-hydroxybenzoate (4HB) for the ubiquinone pathway. The chain is Chorismate pyruvate-lyase from Salmonella gallinarum (strain 287/91 / NCTC 13346).